The primary structure comprises 713 residues: Leucine-rich repeat neuronal protein 2 (713 aa).

The first 18 residues, 1 to 18 (MRLLVAPLLLAWVAGATA), serve as a signal peptide directing secretion. Residues 19-630 (AVPVVPWHVP…CHRALGDRPG (612 aa)) lie on the Extracellular side of the membrane. One can recognise an LRRNT domain in the interval 20-69 (VPVVPWHVPCPPQCACQIRPWYTPRSSYREATTVDCNDLFLTAVPPALPA). 12 LRR repeats span residues 70–91 (GTQT…ELGY), 94–115 (NLTE…DFHA), 118–139 (QLLS…SFAG), 142–163 (SLQE…AFSG), 166–187 (NLLR…WFEM), 190–211 (NLEI…NFRP), 214–235 (NLRS…ALEG), 238–259 (SLES…ALEQ), 262–283 (GLKF…DFAN), 286–305 (HLKE…DKFA), 311–333 (ELTK…AFHH), and 336–357 (QMET…TVES). N-linked (GlcNAc...) asparagine glycosylation occurs at N94. The region spanning 369-422 (NPIRCDCVIRWANATGTRVRFIEPQSTLCAEPPDLQRLPVREVPFREMTDHCLP) is the LRRCT domain. N381 carries N-linked (GlcNAc...) asparagine glycosylation. The Ig-like C2-type domain maps to 422 to 511 (PLISPRSFPP…LVGADTKTVS (90 aa)). C445 and C497 are joined by a disulfide. Residues N555 and N583 are each glycosylated (N-linked (GlcNAc...) asparagine). A helical transmembrane segment spans residues 631 to 651 (LIAILALAVLLLAAGLAAHLG). At 652-713 (TGQPRKGVGG…TLLPPLSQNS (62 aa)) the chain is on the cytoplasmic side.

Overamplified in malignant gliomas.

The protein resides in the membrane. This is Leucine-rich repeat neuronal protein 2 (LRRN2) from Homo sapiens (Human).